The primary structure comprises 668 residues: S-adenosyl-L-methionine-dependent tRNA 4-demethylwyosine synthase TYW1B (668 aa).

Positions 37–191 (CVQIVIEMQG…NFRAWKTKFI (155 aa)) constitute a Flavodoxin-like domain. Residues 43–47 (EMQGF) and 130–162 (VFGLGNSAYASHFNKVGKNVDKWLWMLGVHRVM) contribute to the FMN site. A disordered region spans residues 202–269 (RKKSCGGHCK…QSLNSIVDVE (68 aa)). 2 stretches are compositionally biased toward basic and acidic residues: residues 213 to 223 (GKCESHQHGSE) and 233 to 243 (DELHHRDTKEE). Acidic residues predominate over residues 244–255 (EPFESSSEEEFG). The Radical SAM core domain maps to 336 to 580 (LWNESHRCME…VDLIPEYEIA (245 aa)). [4Fe-4S] cluster is bound by residues C352, C356, and C359.

The protein belongs to the TYW1 family. It depends on [4Fe-4S] cluster as a cofactor.

The enzyme catalyses N(1)-methylguanosine(37) in tRNA(Phe) + pyruvate + S-adenosyl-L-methionine = 4-demethylwyosine(37) in tRNA(Phe) + 5'-deoxyadenosine + L-methionine + CO2 + H2O. It participates in tRNA modification; wybutosine-tRNA(Phe) biosynthesis. Functionally, probable component of the wybutosine biosynthesis pathway. Wybutosine is a hyper modified guanosine with a tricyclic base found at the 3'-position adjacent to the anticodon of eukaryotic phenylalanine tRNA. Catalyzes the condensation of N-methylguanine with 2 carbon atoms from pyruvate to form the tricyclic 4-demethylwyosine, an intermediate in wybutosine biosynthesis. This chain is S-adenosyl-L-methionine-dependent tRNA 4-demethylwyosine synthase TYW1B (TYW1B), found in Homo sapiens (Human).